The sequence spans 689 residues: Long-chain-fatty-acid--CoA ligase 2 (689 aa).

252 to 263 (YTSGSTGKPKGV) is an ATP binding site. The FACS motif lies at 518–567 (DGWFKTGDVGEIAKGNTLRLIDRKKNIVKSLNGEYIALEKIEAQFFTSPL).

The protein belongs to the ATP-dependent AMP-binding enzyme family. Requires Mg(2+) as cofactor.

The protein resides in the golgi apparatus. It is found in the vacuole membrane. It catalyses the reaction a long-chain fatty acid + ATP + CoA = a long-chain fatty acyl-CoA + AMP + diphosphate. In terms of biological role, esterification, concomitant with transport, of endogenous long-chain fatty acids into metabolically active CoA thioesters for subsequent degradation or incorporation into phospholipids. Plays an important role in the determination of viability in the stationary phase. The sequence is that of Long-chain-fatty-acid--CoA ligase 2 (lcf2) from Schizosaccharomyces pombe (strain 972 / ATCC 24843) (Fission yeast).